The chain runs to 430 residues: Protein translocase subunit SecY (430 aa).

10 helical membrane-spanning segments follow: residues 18–38, 68–88, 117–137, 147–167, 179–199, 217–237, 269–289, 308–328, 368–388, and 389–409; these read IFFT…PAPG, FSIF…MQLL, LAIS…NNYL, IMSY…LIWL, GISI…LIQF, VLGL…VLEA, GVIP…LTLF, NVGM…YAFV, FVGS…TKFM, and GLPQ…GVAI.

It belongs to the SecY/SEC61-alpha family. In terms of assembly, component of the Sec protein translocase complex. Heterotrimer consisting of SecY, SecE and SecG subunits. The heterotrimers can form oligomers, although 1 heterotrimer is thought to be able to translocate proteins. Interacts with the ribosome. Interacts with SecDF, and other proteins may be involved. Interacts with SecA.

The protein resides in the cell membrane. The central subunit of the protein translocation channel SecYEG. Consists of two halves formed by TMs 1-5 and 6-10. These two domains form a lateral gate at the front which open onto the bilayer between TMs 2 and 7, and are clamped together by SecE at the back. The channel is closed by both a pore ring composed of hydrophobic SecY resides and a short helix (helix 2A) on the extracellular side of the membrane which forms a plug. The plug probably moves laterally to allow the channel to open. The ring and the pore may move independently. This chain is Protein translocase subunit SecY, found in Staphylococcus aureus (strain NCTC 8325 / PS 47).